An 80-amino-acid polypeptide reads, in one-letter code: Small ribosomal subunit protein bS18 (80 aa).

Belongs to the bacterial ribosomal protein bS18 family. In terms of assembly, part of the 30S ribosomal subunit. Forms a tight heterodimer with protein bS6.

Binds as a heterodimer with protein bS6 to the central domain of the 16S rRNA, where it helps stabilize the platform of the 30S subunit. The protein is Small ribosomal subunit protein bS18 of Staphylococcus saprophyticus subsp. saprophyticus (strain ATCC 15305 / DSM 20229 / NCIMB 8711 / NCTC 7292 / S-41).